A 1682-amino-acid polypeptide reads, in one-letter code: Cilia- and flagella-associated protein 43 (1682 aa).

WD repeat units follow at residues asparagine 168–histidine 207, proline 262–leucine 305, aspartate 315–lysine 354, glutamate 358–lysine 397, leucine 488–isoleucine 527, and serine 697–alanine 738. Residues arginine 767 to glutamate 790 are disordered. Coiled coils occupy residues lysine 926–glutamine 960 and serine 1171–arginine 1223.

The protein belongs to the CFAP43 family. As to expression, expressed in testis. Expressed in the lung, brain, oviduct and nasal cavity.

The protein localises to the cell projection. Its subcellular location is the cilium. It is found in the flagellum. The protein resides in the cytoplasm. It localises to the cytoskeleton. The protein localises to the flagellum axoneme. Its subcellular location is the cilium axoneme. Functionally, flagellar protein involved in sperm flagellum axoneme organization and function. Involved in the regulation of the beating frequency of motile cilia on the epithelial cells of the respiratory tract. This is Cilia- and flagella-associated protein 43 from Mus musculus (Mouse).